The chain runs to 1407 residues: DNA-directed RNA polymerase subunit beta' (1407 aa).

Zn(2+) contacts are provided by C70, C72, C85, and C88. Positions 460, 462, and 464 each coordinate Mg(2+). Zn(2+) contacts are provided by C814, C888, C895, and C898. The residue at position 972 (K972) is an N6-acetyllysine.

It belongs to the RNA polymerase beta' chain family. As to quaternary structure, the RNAP catalytic core consists of 2 alpha, 1 beta, 1 beta' and 1 omega subunit. When a sigma factor is associated with the core the holoenzyme is formed, which can initiate transcription. It depends on Mg(2+) as a cofactor. Zn(2+) serves as cofactor.

The enzyme catalyses RNA(n) + a ribonucleoside 5'-triphosphate = RNA(n+1) + diphosphate. Functionally, DNA-dependent RNA polymerase catalyzes the transcription of DNA into RNA using the four ribonucleoside triphosphates as substrates. This is DNA-directed RNA polymerase subunit beta' from Escherichia coli (strain SMS-3-5 / SECEC).